The following is an 86-amino-acid chain: Small ribosomal subunit protein bS20 (86 aa).

Residues 1-25 (MANIKSQQKRNRTNERARLRNKAVK) form a disordered region.

This sequence belongs to the bacterial ribosomal protein bS20 family.

Functionally, binds directly to 16S ribosomal RNA. The polypeptide is Small ribosomal subunit protein bS20 (Mycobacterium bovis (strain ATCC BAA-935 / AF2122/97)).